A 273-amino-acid chain; its full sequence is Undecaprenyl-diphosphatase (273 aa).

Helical transmembrane passes span alanine 48–phenylalanine 68, leucine 89–glutamate 109, leucine 116–alanine 136, isoleucine 152–phenylalanine 172, alanine 193–leucine 213, alanine 222–isoleucine 242, and isoleucine 252–tyrosine 272.

Belongs to the UppP family.

It is found in the cell membrane. It catalyses the reaction di-trans,octa-cis-undecaprenyl diphosphate + H2O = di-trans,octa-cis-undecaprenyl phosphate + phosphate + H(+). Catalyzes the dephosphorylation of undecaprenyl diphosphate (UPP). Confers resistance to bacitracin. This chain is Undecaprenyl-diphosphatase, found in Geobacillus thermodenitrificans (strain NG80-2).